A 128-amino-acid chain; its full sequence is Large ribosomal subunit protein eL22 (128 aa).

Belongs to the eukaryotic ribosomal protein eL22 family. Component of the large ribosomal subunit.

The protein localises to the cytoplasm. In terms of biological role, component of the large ribosomal subunit. The ribosome is a large ribonucleoprotein complex responsible for the synthesis of proteins in the cell. The chain is Large ribosomal subunit protein eL22 (rpl22) from Ictalurus punctatus (Channel catfish).